The primary structure comprises 245 residues: 1-(5-phosphoribosyl)-5-[(5-phosphoribosylamino)methylideneamino] imidazole-4-carboxamide isomerase (245 aa).

Aspartate 11 (proton acceptor) is an active-site residue. Residue aspartate 132 is the Proton donor of the active site.

This sequence belongs to the HisA/HisF family.

It is found in the cytoplasm. The enzyme catalyses 1-(5-phospho-beta-D-ribosyl)-5-[(5-phospho-beta-D-ribosylamino)methylideneamino]imidazole-4-carboxamide = 5-[(5-phospho-1-deoxy-D-ribulos-1-ylimino)methylamino]-1-(5-phospho-beta-D-ribosyl)imidazole-4-carboxamide. It participates in amino-acid biosynthesis; L-histidine biosynthesis; L-histidine from 5-phospho-alpha-D-ribose 1-diphosphate: step 4/9. In Bacillus pumilus (strain SAFR-032), this protein is 1-(5-phosphoribosyl)-5-[(5-phosphoribosylamino)methylideneamino] imidazole-4-carboxamide isomerase.